Here is a 593-residue protein sequence, read N- to C-terminus: Mitochondrial sodium/calcium exchanger protein (593 aa).

The N-terminal stretch at 1 to 20 is a signal peptide; it reads MGPLWALRVAGALSVAGVLA. Topologically, residues 21–93 are extracellular; that stretch reads GHDGSQRAGQ…GAFCTFPSSL (73 aa). The N-linked (GlcNAc...) asparagine glycan is linked to N58. The helical transmembrane segment at 94-114 threads the bilayer; that stretch reads LPLSVSLYALWLLYLFVILGV. The Cytoplasmic segment spans residues 115-135; the sequence is TAEKFFCPNLSAISTNLKLSH. The chain crosses the membrane as a helical span at residues 136–158; that stretch reads NGLGVVGHSLTPALHGVTFLAFG. The Extracellular segment spans residues 159 to 178; that stretch reads NGAPDIFSAVVAFSDPRTAG. The chain crosses the membrane as a helical span at residues 179–199; it reads LAVGAIFGAGIFVTTVVAGGI. The Cytoplasmic portion of the chain corresponds to 200 to 215; that stretch reads ALVKPFAAASRPFLRD. The chain crosses the membrane as a helical span at residues 216 to 236; sequence VIFYMVAVFLTFLVLYFGYIT. At 237–239 the chain is on the extracellular side; that stretch reads LGE. A helical membrane pass occupies residues 240-260; it reads ALGYLGLYVFYVFTVVLCTWI. Topologically, residues 261-334 are cytoplasmic; sequence HRWQRGDGPP…KWRRKPWYWR (74 aa). Positions 268–277 are enriched in pro residues; that stretch reads GPPPPGPWEP. The tract at residues 268–291 is disordered; that stretch reads GPPPPGPWEPAIPTDAEEQESSGT. A helical transmembrane segment spans residues 335 to 355; it reads LFKVLKVPVELVLLLTVPVVD. At 356 to 369 the chain is on the extracellular side; it reads PDKDDLNWKRPLNC. Residues 370 to 390 traverse the membrane as a helical segment; that stretch reads LHIVTGPLLCIFTLKSGAYGL. Over 391–395 the chain is Cytoplasmic; it reads YQIQG. The chain crosses the membrane as a helical span at residues 396-416; the sequence is VFPVWALVALAGSVLAIIVFV. At 417–428 the chain is on the extracellular side; the sequence is TTHNEEPPKYHC. The helical transmembrane segment at 429 to 449 threads the bilayer; it reads VFAFLGFLSSAMWINAAATEL. Residues 450 to 454 lie on the Cytoplasmic side of the membrane; it reads VNILR. Residues 455–475 traverse the membrane as a helical segment; the sequence is TLGIIFELSNTVLGLTLLAWG. Residues 476-496 lie on the Extracellular side of the membrane; that stretch reads NSIGDTFSDLTMARQGYPRMA. A helical transmembrane segment spans residues 497–517; sequence FSACFGGIIFNILVGVGLGCL. At 518-533 the chain is on the cytoplasmic side; the sequence is LQMTNSQMVVKLEPDS. The helical transmembrane segment at 534–554 threads the bilayer; the sequence is LLVWILAGALGLSLVFSFVAV. Over 555–564 the chain is Extracellular; that stretch reads PAQCFQLGKA. A helical transmembrane segment spans residues 565-585; it reads YGTCLILYYLVFLCVALLTEF. Residues 586–593 lie on the Cytoplasmic side of the membrane; sequence RVIHLAAT.

Belongs to the Ca(2+):cation antiporter (CaCA) (TC 2.A.19) family. SLC24A subfamily.

It localises to the mitochondrion inner membrane. It carries out the reaction Ca(2+)(in) + 3 Na(+)(out) = Ca(2+)(out) + 3 Na(+)(in). In terms of biological role, mitochondrial sodium/calcium antiporter that mediates sodium-dependent calcium efflux from mitochondrion, by mediating the exchange of 3 sodium ions per 1 calcium ion. Plays a central role in mitochondrial calcium homeostasis by mediating mitochondrial calcium extrusion: calcium efflux is essential for mitochondrial function and cell survival, notably in cardiomyocytes. Involved in B-lymphocyte chemotaxis. The sequence is that of Mitochondrial sodium/calcium exchanger protein from Gallus gallus (Chicken).